A 197-amino-acid chain; its full sequence is Large ribosomal subunit protein bL9 (197 aa).

The interval 178–197 (GEFFDPEAQEDEAAAGETAQ) is disordered. Acidic residues predominate over residues 181–191 (FDPEAQEDEAA).

The protein belongs to the bacterial ribosomal protein bL9 family.

Binds to the 23S rRNA. This chain is Large ribosomal subunit protein bL9, found in Bradyrhizobium sp. (strain BTAi1 / ATCC BAA-1182).